The chain runs to 480 residues: Speriolin (480 aa).

Residues 1 to 76 (MSLLTSYEGL…HQGVFLPPAS (76 aa)) form a necessary for targeting to centrosomes region. Positions 2–45 (SLLTSYEGLRHQIERLVRENEELKKLVRLIRENQELKSAIKTQA) form a coiled coil. 2 disordered regions span residues 252 to 297 (INNI…SRVM) and 305 to 324 (VEMERKTPHRKSNKLPDNPR).

This sequence belongs to the speriolin family. As to quaternary structure, found in a complex with CDC20, CDC27 and TUBG1. Interacts with CDC20. In terms of tissue distribution, expressed in testis. Expressed in pachyten spermatocytes, spermatids and epididymal sperm (at protein level).

The protein resides in the cytoplasm. It localises to the cytoskeleton. Its subcellular location is the microtubule organizing center. The protein localises to the centrosome. The chain is Speriolin (Spatc1) from Mus musculus (Mouse).